Reading from the N-terminus, the 431-residue chain is Glutamyl-tRNA(Gln) amidotransferase subunit A (431 aa).

Active-site charge relay system residues include lysine 55 and serine 130. Serine 154 (acyl-ester intermediate) is an active-site residue.

It belongs to the amidase family. GatA subfamily. Heterotrimer of A, B and C subunits.

The catalysed reaction is L-glutamyl-tRNA(Gln) + L-glutamine + ATP + H2O = L-glutaminyl-tRNA(Gln) + L-glutamate + ADP + phosphate + H(+). Its function is as follows. Allows the formation of correctly charged Gln-tRNA(Gln) through the transamidation of misacylated Glu-tRNA(Gln) in organisms which lack glutaminyl-tRNA synthetase. The reaction takes place in the presence of glutamine and ATP through an activated gamma-phospho-Glu-tRNA(Gln). The polypeptide is Glutamyl-tRNA(Gln) amidotransferase subunit A (Methanococcus maripaludis (strain DSM 14266 / JCM 13030 / NBRC 101832 / S2 / LL)).